The chain runs to 223 residues: Ribose-5-phosphate isomerase A (223 aa).

Substrate-binding positions include 32–35 (TGST), 85–88 (DGAD), and 98–101 (KGGG). Glu107 serves as the catalytic Proton acceptor. Lys125 is a substrate binding site.

This sequence belongs to the ribose 5-phosphate isomerase family. Homodimer.

The enzyme catalyses aldehydo-D-ribose 5-phosphate = D-ribulose 5-phosphate. The protein operates within carbohydrate degradation; pentose phosphate pathway; D-ribose 5-phosphate from D-ribulose 5-phosphate (non-oxidative stage): step 1/1. In terms of biological role, catalyzes the reversible conversion of ribose-5-phosphate to ribulose 5-phosphate. This Pseudomonas fluorescens (strain ATCC BAA-477 / NRRL B-23932 / Pf-5) protein is Ribose-5-phosphate isomerase A.